A 96-amino-acid polypeptide reads, in one-letter code: Cytoplasmic envelopment protein 3 (96 aa).

G2 is lipidated: N-myristoyl glycine; by host. Positions 18-19 match the Di-leucine-like internalization motif motif; sequence LI. The tract at residues 37-43 is asp/Glu-rich (acidic); that stretch reads DIESEEE. S40 bears the Phosphoserine mark. Residues 44–96 form a disordered region; that stretch reads GNFYVPPDMRGVTRAPGRQRLRSSDPPSRHTHRRTPGGACPATQFPPPMSDSE. The segment covering 87 to 96 has biased composition (pro residues); sequence QFPPPMSDSE.

The protein belongs to the herpesviridae cytoplasmic envelopment protein 3 family. As to quaternary structure, interacts with cytoplasmic envelopment protein 2; this interaction is essential for the proper localization of each protein to the assembly complex and thus for the production of infectious virus. Interacts with gE (via C-terminus). Interacts with gD (via C-terminus). Interacts with UL56. Post-translationally, myristoylation and palmitoylation (probably on one or more of the nearby cysteines at the N-terminus) enable membrane-binding and Golgi apparatus-specific targeting and are essential for efficient packaging. In terms of processing, phosphorylated. Phosphorylation does not seem to be required for recycling to the host Golgi apparatus. Packaging is selective for underphosphorylated forms.

The protein resides in the virion tegument. The protein localises to the virion membrane. Its subcellular location is the host cell membrane. It is found in the host Golgi apparatus membrane. Its function is as follows. Plays an important role in the cytoplasmic envelopment of tegument proteins and capsids during the assembly and egress processes. Also participates in viral entry at the fusion step probably by regulating the core fusion machinery. This chain is Cytoplasmic envelopment protein 3, found in Homo sapiens (Human).